The primary structure comprises 268 residues: Phosphatidylglycerol--prolipoprotein diacylglyceryl transferase (268 aa).

The next 7 helical transmembrane spans lie at 27 to 47 (PALR…MWLL), 66 to 86 (LLFY…VLFY), 104 to 124 (GGMS…YITW), 130 to 150 (FFAV…AGRI), 181 to 201 (PSQL…LYWF), 208 to 228 (VGAV…IVET), and 242 to 262 (LMTM…YLIL). Arg149 serves as a coordination point for a 1,2-diacyl-sn-glycero-3-phospho-(1'-sn-glycerol).

Belongs to the Lgt family.

Its subcellular location is the cell inner membrane. It carries out the reaction L-cysteinyl-[prolipoprotein] + a 1,2-diacyl-sn-glycero-3-phospho-(1'-sn-glycerol) = an S-1,2-diacyl-sn-glyceryl-L-cysteinyl-[prolipoprotein] + sn-glycerol 1-phosphate + H(+). Its pathway is protein modification; lipoprotein biosynthesis (diacylglyceryl transfer). Catalyzes the transfer of the diacylglyceryl group from phosphatidylglycerol to the sulfhydryl group of the N-terminal cysteine of a prolipoprotein, the first step in the formation of mature lipoproteins. The polypeptide is Phosphatidylglycerol--prolipoprotein diacylglyceryl transferase (Shewanella oneidensis (strain ATCC 700550 / JCM 31522 / CIP 106686 / LMG 19005 / NCIMB 14063 / MR-1)).